A 137-amino-acid polypeptide reads, in one-letter code: Holo-[acyl-carrier-protein] synthase (137 aa).

Mg(2+)-binding residues include Asp7 and Glu58.

The protein belongs to the P-Pant transferase superfamily. AcpS family. The cofactor is Mg(2+).

Its subcellular location is the cytoplasm. The enzyme catalyses apo-[ACP] + CoA = holo-[ACP] + adenosine 3',5'-bisphosphate + H(+). Transfers the 4'-phosphopantetheine moiety from coenzyme A to a Ser of acyl-carrier-protein. This is Holo-[acyl-carrier-protein] synthase from Chloroflexus aurantiacus (strain ATCC 29366 / DSM 635 / J-10-fl).